The following is a 676-amino-acid chain: Methionine--tRNA ligase (676 aa).

The 'HIGH' region signature appears at 11-21 (PYANGPCHLGH). Zn(2+) is bound by residues Cys143, Cys146, Cys156, and Cys159. The 'KMSKS' region motif lies at 326-330 (KMSTS). Thr329 contacts ATP. In terms of domain architecture, tRNA-binding spans 581-676 (EFGKVKLVVG…TEGNVGEYIK (96 aa)).

Belongs to the class-I aminoacyl-tRNA synthetase family. MetG type 1 subfamily. As to quaternary structure, homodimer. The cofactor is Zn(2+).

The protein resides in the cytoplasm. The catalysed reaction is tRNA(Met) + L-methionine + ATP = L-methionyl-tRNA(Met) + AMP + diphosphate. Is required not only for elongation of protein synthesis but also for the initiation of all mRNA translation through initiator tRNA(fMet) aminoacylation. The protein is Methionine--tRNA ligase of Methanosphaera stadtmanae (strain ATCC 43021 / DSM 3091 / JCM 11832 / MCB-3).